Reading from the N-terminus, the 335-residue chain is Biotin synthase (335 aa).

The 229-residue stretch at 46 to 274 folds into the Radical SAM core domain; the sequence is YKVQLASLFS…KSKIRLSAGR (229 aa). Cysteine 61, cysteine 65, and cysteine 68 together coordinate [4Fe-4S] cluster. Cysteine 105, cysteine 137, cysteine 197, and arginine 269 together coordinate [2Fe-2S] cluster.

This sequence belongs to the radical SAM superfamily. Biotin synthase family. Homodimer. It depends on [4Fe-4S] cluster as a cofactor. The cofactor is [2Fe-2S] cluster.

The catalysed reaction is (4R,5S)-dethiobiotin + (sulfur carrier)-SH + 2 reduced [2Fe-2S]-[ferredoxin] + 2 S-adenosyl-L-methionine = (sulfur carrier)-H + biotin + 2 5'-deoxyadenosine + 2 L-methionine + 2 oxidized [2Fe-2S]-[ferredoxin]. It functions in the pathway cofactor biosynthesis; biotin biosynthesis; biotin from 7,8-diaminononanoate: step 2/2. Functionally, catalyzes the conversion of dethiobiotin (DTB) to biotin by the insertion of a sulfur atom into dethiobiotin via a radical-based mechanism. The polypeptide is Biotin synthase (Prochlorococcus marinus subsp. pastoris (strain CCMP1986 / NIES-2087 / MED4)).